The primary structure comprises 237 residues: Demethylmenaquinone methyltransferase (237 aa).

Residues Thr-58, Asp-79, and 106–107 (NA) contribute to the S-adenosyl-L-methionine site.

Belongs to the class I-like SAM-binding methyltransferase superfamily. MenG/UbiE family.

The enzyme catalyses a 2-demethylmenaquinol + S-adenosyl-L-methionine = a menaquinol + S-adenosyl-L-homocysteine + H(+). The protein operates within quinol/quinone metabolism; menaquinone biosynthesis; menaquinol from 1,4-dihydroxy-2-naphthoate: step 2/2. Methyltransferase required for the conversion of demethylmenaquinol (DMKH2) to menaquinol (MKH2). The protein is Demethylmenaquinone methyltransferase of Anoxybacillus flavithermus (strain DSM 21510 / WK1).